The following is a 126-amino-acid chain: Small ribosomal subunit protein uS12 (126 aa).

The interval 1–26 (MPTINQLVRKGRASETTKSKSPALQD) is disordered. Position 89 is a 3-methylthioaspartic acid (Asp-89). Residues 102–126 (LDTQGVKDRRQARSKYGAKRAKAAK) are disordered. Over residues 113 to 126 (ARSKYGAKRAKAAK) the composition is skewed to basic residues.

It belongs to the universal ribosomal protein uS12 family. As to quaternary structure, part of the 30S ribosomal subunit. Contacts proteins S8 and S17. May interact with IF1 in the 30S initiation complex.

Functionally, with S4 and S5 plays an important role in translational accuracy. Interacts with and stabilizes bases of the 16S rRNA that are involved in tRNA selection in the A site and with the mRNA backbone. Located at the interface of the 30S and 50S subunits, it traverses the body of the 30S subunit contacting proteins on the other side and probably holding the rRNA structure together. The combined cluster of proteins S8, S12 and S17 appears to hold together the shoulder and platform of the 30S subunit. In Burkholderia mallei (strain ATCC 23344), this protein is Small ribosomal subunit protein uS12.